Reading from the N-terminus, the 256-residue chain is POU domain class 2-associating factor 1 (256 aa).

The segment at 1–24 (MLWQKSTAPEQAPAPPRPYQGVRV) is disordered. Positions 16 to 38 (PRPYQGVRVKEPVKELLRRKRGH) constitute an OCA domain.

This sequence belongs to the POU2AF family. In terms of assembly, interacts with POU2F1/OCT1 and POU2F2/OCT2; the interaction increases POU2F1 and POU2F2 transactivation activity. In terms of processing, ubiquitinated; mediated by SIAH1 or SIAH2 and leading to its subsequent proteasomal degradation. B-cell specific.

Its subcellular location is the nucleus. In terms of biological role, transcriptional coactivator that specifically associates with either POU2F1/OCT1 or POU2F2/OCT2. It boosts the POU2F1/OCT1 mediated promoter activity and to a lesser extent, that of POU2F2/OCT2. It recognizes the POU domains of POU2F1/OCT1 and POU2F2/OCT2. It is essential for the response of B-cells to antigens and required for the formation of germinal centers. Regulates IL6 expression in B cells as POU2F2/OCT2 coactivator. This chain is POU domain class 2-associating factor 1, found in Mus musculus (Mouse).